The sequence spans 89 residues: Co-chaperonin GroES (89 aa).

This sequence belongs to the GroES chaperonin family. Heptamer of 7 subunits arranged in a ring. Interacts with the chaperonin GroEL.

Its subcellular location is the cytoplasm. Together with the chaperonin GroEL, plays an essential role in assisting protein folding. The GroEL-GroES system forms a nano-cage that allows encapsulation of the non-native substrate proteins and provides a physical environment optimized to promote and accelerate protein folding. GroES binds to the apical surface of the GroEL ring, thereby capping the opening of the GroEL channel. The sequence is that of Co-chaperonin GroES from Kosmotoga olearia (strain ATCC BAA-1733 / DSM 21960 / TBF 19.5.1).